A 174-amino-acid chain; its full sequence is MTTIITVRKGGKVVMAGDGQVSLGQTVMKGNARKVRRIGKGEVIAGFAGATADAFTLLDRLEKKLEQYPGQLMRAAVELAKDWRTDKYLRNLEAMMLVADKSTTLAITGNGDVLEPEHGAIAIGSGGNYAFAAARAMMDTDKSAEEVARQSLDIAADICVYTNHNLVVETLDAE.

Residue Thr2 is part of the active site. Na(+) contacts are provided by Ala156, Cys159, and Thr162.

It belongs to the peptidase T1B family. HslV subfamily. A double ring-shaped homohexamer of HslV is capped on each side by a ring-shaped HslU homohexamer. The assembly of the HslU/HslV complex is dependent on binding of ATP.

The protein resides in the cytoplasm. The enzyme catalyses ATP-dependent cleavage of peptide bonds with broad specificity.. Allosterically activated by HslU binding. Functionally, protease subunit of a proteasome-like degradation complex believed to be a general protein degrading machinery. This Agrobacterium fabrum (strain C58 / ATCC 33970) (Agrobacterium tumefaciens (strain C58)) protein is ATP-dependent protease subunit HslV.